The following is a 494-amino-acid chain: UDP-N-acetylmuramate--L-alanine ligase (494 aa).

140 to 146 (GTHGKTT) lines the ATP pocket.

Belongs to the MurCDEF family.

Its subcellular location is the cytoplasm. The catalysed reaction is UDP-N-acetyl-alpha-D-muramate + L-alanine + ATP = UDP-N-acetyl-alpha-D-muramoyl-L-alanine + ADP + phosphate + H(+). It participates in cell wall biogenesis; peptidoglycan biosynthesis. Functionally, cell wall formation. This Nostoc sp. (strain PCC 7120 / SAG 25.82 / UTEX 2576) protein is UDP-N-acetylmuramate--L-alanine ligase.